Reading from the N-terminus, the 360-residue chain is E3 ubiquitin-protein ligase HAKAI homolog (360 aa).

Residues 1–11 show a composition bias toward basic and acidic residues; that stretch reads MLQIRLRRDSP. Residues 1 to 24 form a disordered region; sequence MLQIRLRRDSPTETGNGARPSPTE. Residues 72-107 form an RING-type zinc finger; that stretch reads CVRCDFPIAIYGRLIPCDHAFCLECARSDSICYLCD. A C2H2-type zinc finger spans residues 123 to 148; it reads FICAAPHCLRSFLKKLDFEAHVHDLH. Residues 156 to 360 form a disordered region; it reads AEKEDGNQSD…QENRDGFGQE (205 aa). Composition is skewed to polar residues over residues 163–179, 186–214, and 270–283; these read QSDV…SEST, SQLQ…QNYP, and YPTT…QFFN. Positions 293 to 304 are enriched in low complexity; that stretch reads ESGGSEQSSLLG.

This sequence belongs to the Hakai family. As to quaternary structure, interacts with MTB and VIR. Associates with MTA, MTB, FIP37 and VIR to form the m6A writer complex which is essential for adenosine methylation at specific mRNA sequences.

The protein localises to the nucleus speckle. It is found in the nucleus. The protein resides in the nucleoplasm. It carries out the reaction S-ubiquitinyl-[E2 ubiquitin-conjugating enzyme]-L-cysteine + [acceptor protein]-L-lysine = [E2 ubiquitin-conjugating enzyme]-L-cysteine + N(6)-ubiquitinyl-[acceptor protein]-L-lysine.. Its function is as follows. Probable E3 ubiquitin-protein ligase which is a subunit of the N6-methyltransferase complex, a multiprotein complex that mediates N6-methyladenosine (m6A) methylation at the 5'-[AG]GAC-3' consensus sites of some mRNAs. Associates with MTA, MTB, FIP37 and VIR to form the m6A writer complex which is essential for adenosine methylation at specific mRNA sequences. N6-methyladenosine (m6A) plays a role in mRNA stability, processing, translation efficiency and editing. The chain is E3 ubiquitin-protein ligase HAKAI homolog from Arabidopsis thaliana (Mouse-ear cress).